The following is a 349-amino-acid chain: Adenine deaminase (349 aa).

H24, H26, and H204 together coordinate Zn(2+). Residue E207 is the Proton donor of the active site. Residue D285 participates in Zn(2+) binding. D286 lines the substrate pocket.

The protein belongs to the metallo-dependent hydrolases superfamily. Adenosine and AMP deaminases family. Adenine deaminase type 2 subfamily. Requires Zn(2+) as cofactor.

The enzyme catalyses adenine + H2O + H(+) = hypoxanthine + NH4(+). In terms of biological role, catalyzes the hydrolytic deamination of adenine to hypoxanthine. Plays an important role in the purine salvage pathway and in nitrogen catabolism. The protein is Adenine deaminase of Trichlorobacter lovleyi (strain ATCC BAA-1151 / DSM 17278 / SZ) (Geobacter lovleyi).